A 234-amino-acid chain; its full sequence is Structural PPIase-like protein L605 (234 aa).

Positions 18 to 205 (YMDIVLNNEI…PTFSIGKCGA (188 aa)) constitute a PPIase cyclophilin-type domain.

It belongs to the cyclophilin-type PPIase family. As to quaternary structure, homotrimer.

The protein localises to the virion. The protein resides in the host cytoplasm. This chain is Structural PPIase-like protein L605, found in Acanthamoeba polyphaga mimivirus (APMV).